The following is a 260-amino-acid chain: Resolvase (260 aa).

The Tyr recombinase domain occupies 38 to 241; sequence ELPKYLLAPE…FALDVAARHR (204 aa). Active-site residues include Arg-73, Lys-105, His-193, Arg-196, and His-219. The active-site O-(3'-phospho-DNA)-tyrosine intermediate is Tyr-228.

Belongs to the 'phage' integrase family.

Its function is as follows. This resolvase acts at the RfsF equivalent resolution sequence of pColBM-CL139. The chain is Resolvase (resD) from Escherichia coli.